The primary structure comprises 473 residues: tRNA modification GTPase MnmE (473 aa).

Residues Arg30, Glu95, and Arg134 each coordinate (6S)-5-formyl-5,6,7,8-tetrahydrofolate. Residues 230–394 (GVSTVIAGRP…LKLLMASMVE (165 aa)) enclose the TrmE-type G domain. GTP-binding positions include 240–245 (NAGKST), 259–265 (SHMPGTT), and 284–287 (DTAG). Mg(2+) is bound by residues Ser244 and Thr265. Lys473 contributes to the (6S)-5-formyl-5,6,7,8-tetrahydrofolate binding site.

The protein belongs to the TRAFAC class TrmE-Era-EngA-EngB-Septin-like GTPase superfamily. TrmE GTPase family. Homodimer. Heterotetramer of two MnmE and two MnmG subunits. The cofactor is K(+).

It is found in the cytoplasm. Its function is as follows. Exhibits a very high intrinsic GTPase hydrolysis rate. Involved in the addition of a carboxymethylaminomethyl (cmnm) group at the wobble position (U34) of certain tRNAs, forming tRNA-cmnm(5)s(2)U34. This is tRNA modification GTPase MnmE from Chlorobium luteolum (strain DSM 273 / BCRC 81028 / 2530) (Pelodictyon luteolum).